The following is a 582-amino-acid chain: Aspartate--tRNA ligase (582 aa).

Glutamate 174 is an L-aspartate binding site. The interval glutamine 198–lysine 201 is aspartate. Arginine 220 contacts L-aspartate. ATP contacts are provided by residues arginine 220–glutamate 222 and glutamine 229. Histidine 443 provides a ligand contact to L-aspartate. Residue glutamate 477 participates in ATP binding. Residue arginine 484 participates in L-aspartate binding. Position 529–532 (glycine 529–arginine 532) interacts with ATP.

The protein belongs to the class-II aminoacyl-tRNA synthetase family. Type 1 subfamily. Homodimer.

It is found in the cytoplasm. The enzyme catalyses tRNA(Asp) + L-aspartate + ATP = L-aspartyl-tRNA(Asp) + AMP + diphosphate. Functionally, catalyzes the attachment of L-aspartate to tRNA(Asp) in a two-step reaction: L-aspartate is first activated by ATP to form Asp-AMP and then transferred to the acceptor end of tRNA(Asp). This is Aspartate--tRNA ligase from Streptococcus pyogenes serotype M3 (strain ATCC BAA-595 / MGAS315).